A 315-amino-acid polypeptide reads, in one-letter code: ADP/ATP translocase (315 aa).

The Mitochondrial intermembrane segment spans residues 1–13 (MSNKQETKILGMP). 2 Solcar repeats span residues 13–106 (PPFV…FKAM) and 118–210 (KWMA…IKPV). A helical transmembrane segment spans residues 14–37 (PFVVDFLMGGVSAAVSKTAAAPIE). Residue Lys-30 participates in bongkrekate binding. Residues 38–80 (RIKLLVQNQDEMIKAGRLDRRYNGIIDCFRRTTADEGLMALWR) are Mitochondrial matrix-facing. A cardiolipin contacts are provided by residues Ile-62 and 81 to 83 (GNT). Residues 81–104 (GNTANVIRYFPTQALNFAFRDKFK) form a helical membrane-spanning segment. Arg-88 contributes to the ADP binding site. Bongkrekate-binding positions include 88 to 89 (RY) and Asn-96. Residues 105–115 (AMFGYKKDKDG) are Mitochondrial intermembrane-facing. The helical transmembrane segment at 116-145 (YAKWMAGNLASGGAAGATSLLFVYSLDYAR) threads the bilayer. Residues 146 to 184 (TRLANDAKSAKGGGARQFNGLIDVYRKTLASDGIAGLYR) lie on the Mitochondrial matrix side of the membrane. A cardiolipin-binding positions include Leu-166 and 184 to 185 (RG). Residues 185-213 (GFGPSVAGIVVYRGLYFGMYDSIKPVVLV) traverse the membrane as a helical segment. 196–197 (YR) is a bongkrekate binding site. Residues 214–216 (GPL) are Mitochondrial intermembrane-facing. The helical transmembrane segment at 217–242 (ANNFLASFLLGWCVTTGAGIASYPLD) threads the bilayer. The Solcar repeat unit spans residues 218–304 (NNFLASFLLG…LSIYDQLQIL (87 aa)). At 243 to 283 (TVRRRMMMTSGEAVKYKSSIDAFRQIIAKEGVKSLFKGAGA) the chain is on the mitochondrial matrix side. Residue Arg-245 coordinates ADP. The Nucleotide carrier signature motif signature appears at 245–250 (RRRMMM). A cardiolipin is bound by residues 260–261 (SS) and 280–282 (GAG). A helical transmembrane segment spans residues 284–304 (NILRGVAGAGVLSIYDQLQIL). Over 305–315 (LFGKAFKGGSG) the chain is Mitochondrial intermembrane.

This sequence belongs to the mitochondrial carrier (TC 2.A.29) family. Monomer.

It localises to the mitochondrion inner membrane. It carries out the reaction ADP(in) + ATP(out) = ADP(out) + ATP(in). Its activity is regulated as follows. The matrix-open state (m-state) is inhibited by the membrane-permeable bongkrekic acid (BKA). The cytoplasmic-open state (c-state) is inhibited by the membrane-impermeable toxic inhibitor carboxyatractyloside (CATR). Its function is as follows. ADP:ATP antiporter that mediates import of ADP into the mitochondrial matrix for ATP synthesis, and export of ATP out to fuel the cell. Cycles between the cytoplasmic-open state (c-state) and the matrix-open state (m-state): operates by the alternating access mechanism with a single substrate-binding site intermittently exposed to either the cytosolic (c-state) or matrix (m-state) side of the inner mitochondrial membrane. The chain is ADP/ATP translocase from Thermothelomyces thermophilus (strain ATCC 42464 / BCRC 31852 / DSM 1799) (Sporotrichum thermophile).